Consider the following 612-residue polypeptide: FAD-linked oxidoreductase notD' (612 aa).

Residues 1–19 (MRDIRELLLVLFTSCLALG) form the signal peptide. 3 N-linked (GlcNAc...) asparagine glycosylation sites follow: Asn50, Asn86, and Asn109. One can recognise an FAD-binding PCMH-type domain in the interval 124-307 (GQGRIPRYSA…TSITMPVFGA (184 aa)). Asn311 and Asn396 each carry an N-linked (GlcNAc...) asparagine glycan.

The protein belongs to the oxygen-dependent FAD-linked oxidoreductase family. The cofactor is FAD.

Its pathway is alkaloid biosynthesis. In terms of biological role, FAD-linked oxidoreductase; part of the gene cluster that mediates the biosynthesis of notoamide, a fungal indole alkaloid that belongs to a family of natural products containing a characteristic bicyclo[2.2.2]diazaoctane core. The first step of notoamide biosynthesis involves coupling of L-proline and L-tryptophan by the bimodular NRPS notE', to produce cyclo-L-tryptophan-L-proline called brevianamide F. The reverse prenyltransferase notF' then acts as a deoxybrevianamide E synthase and converts brevianamide F to deoxybrevianamide E via reverse prenylation at C-2 of the indole ring leading to the bicyclo[2.2.2]diazaoctane core. Deoxybrevianamide E is further hydroxylated at C-6 of the indole ring, likely catalyzed by the cytochrome P450 monooxygenase notG', to yield 6-hydroxy-deoxybrevianamide E. 6-hydroxy-deoxybrevianamide E is a specific substrate of the prenyltransferase notC' for normal prenylation at C-7 to produce 6-hydroxy-7-prenyl-deoxybrevianamide, also called notoamide S. As the proposed pivotal branching point in notoamide biosynthesis, notoamide S can be diverted to notoamide E through an oxidative pyran ring closure putatively catalyzed by either notH' cytochrome P450 monooxygenase or the notD' FAD-linked oxidoreductase. This step would be followed by an indole 2,3-epoxidation-initiated pinacol-like rearrangement catalyzed by the notB' FAD-dependent monooxygenase leading to the formation of notoamide C and notoamide D. On the other hand notoamide S is converted to notoamide T by notH' (or notD'), a bifunctional oxidase that also functions as the intramolecular Diels-Alderase responsible for generation of (-)-notoamide T. To generate antipodal (+)-notoaminide T, notH (or notD) in Aspergillus strain MF297-2 is expected to catalyze a Diels-Alder reaction leading to the opposite stereochemistry. The remaining oxidoreductase notD' (or notH') likely catalyzes the oxidative pyran ring formation to yield (-)-stephacidin A. The FAD-dependent monooxygenase notI' is highly similar to notB' and is predicted to catalyze a similar conversion from (-)-stephacidin A to (+)-notoamide B via the 2,3-epoxidation of (-)-stephacidin A followed by a pinacol-type rearrangement. Finally, it remains unclear which enzyme could be responsible for the final hydroxylation steps leading to notoamide A and sclerotiamide. The sequence is that of FAD-linked oxidoreductase notD' from Aspergillus versicolor.